An 865-amino-acid polypeptide reads, in one-letter code: Alanine--tRNA ligase (865 aa).

Zn(2+)-binding residues include His554, His558, Cys656, and His660.

It belongs to the class-II aminoacyl-tRNA synthetase family. The cofactor is Zn(2+).

The protein resides in the cytoplasm. The enzyme catalyses tRNA(Ala) + L-alanine + ATP = L-alanyl-tRNA(Ala) + AMP + diphosphate. Catalyzes the attachment of alanine to tRNA(Ala) in a two-step reaction: alanine is first activated by ATP to form Ala-AMP and then transferred to the acceptor end of tRNA(Ala). Also edits incorrectly charged Ser-tRNA(Ala) and Gly-tRNA(Ala) via its editing domain. The chain is Alanine--tRNA ligase from Francisella philomiragia subsp. philomiragia (strain ATCC 25017 / CCUG 19701 / FSC 153 / O#319-036).